We begin with the raw amino-acid sequence, 502 residues long: RxLR effector protein BLN06 (502 aa).

The signal sequence occupies residues 1 to 20 (MTLLHCWLLLVGHLASTAYA). A glycan (N-linked (GlcNAc...) asparagine) is linked at N38. Residues 50 to 53 (LEER) carry the dEER motif.

The protein belongs to the RxLR effector family.

It localises to the secreted. It is found in the host cell membrane. Functionally, secreted effector that triggers a robust hypersensitive response (HR) in Lactuca serriola LS102. The response to BLN06 was visible as chlorosis but not as strong necrosis. This chain is RxLR effector protein BLN06, found in Bremia lactucae (Lettuce downy mildew).